The primary structure comprises 286 residues: Putative WUSCHEL-related homeobox 2 (286 aa).

Disordered regions lie at residues 1 to 25 (MAPA…VGST) and 128 to 152 (SSSS…SPTT). The segment at residues 23-87 (GSTTRWCPTP…NHKARDRQKL (65 aa)) is a DNA-binding region (homeobox; WUS-type).

The protein belongs to the WUS homeobox family.

The protein localises to the nucleus. Transcription factor which may be involved in developmental processes. This is Putative WUSCHEL-related homeobox 2 (WOX2) from Oryza sativa subsp. indica (Rice).